A 574-amino-acid chain; its full sequence is Interleukin-22 receptor subunit alpha-1 (574 aa).

Residues 1-15 form the signal peptide; sequence MRTLLTILTVGSLAA. At 16-228 the chain is on the extracellular side; sequence HAPEDPSDLL…VKTLPDRTWT (213 aa). Fibronectin type-III domains are found at residues 17 to 124 and 141 to 221; these read APED…LKPP and PTPT…RVKT. Residues Cys71 and Cys79 are joined by a disulfide bond. 2 N-linked (GlcNAc...) asparagine glycosylation sites follow: Asn80 and Asn172. Cys128 and Cys217 are disulfide-bonded. The helical transmembrane segment at 229–249 threads the bilayer; that stretch reads YSFSGAFLFSMGFLVAVLCYL. Over 250–574 the chain is Cytoplasmic; sequence SYRYVTKPPA…GLALTVQWES (325 aa). Disordered stretches follow at residues 388 to 440, 454 to 489, and 507 to 560; these read SSYA…AGSC, AMEESQEAKSLHQPLGICTDRTSDPNVLHSGEEGTP, and HPMS…TELD. Residues Ser410 and Ser414 each carry the phosphoserine modification.

The protein belongs to the type II cytokine receptor family. Heterodimer with IL10RB and with IL20RB. IL22 binding to heterodimer is greater than binding to IL22RA1 alone. Interacts with FBXW12; the interaction promotes ubiquitination of IL22RA1. Ubiquitinated. In terms of tissue distribution, expressed in colon, liver, lung, pancreas and kidney. No expression in immune cells such as monocytes, T-cells, and NK-cells. Expressed in keratinocytes of normal skin as well as in psoriatic skin lesion. Detected in normal blood brain barrier endothelial cells as well as in multiple sclerosis lesions; Strongly expressed on central nervous system vessels within infiltrated multiple sclerosis lesions. Overexpressed in synovial fluid cells from rheumatoid arthritis and spondyloarthropathy patients.

It localises to the cell membrane. Functionally, component of the receptor for IL20, IL22 and IL24. Component of IL22 receptor formed by IL22RA1 and IL10RB enabling IL22 signaling via JAK/STAT pathways. IL22 also induces activation of MAPK1/MAPK3 and Akt kinases pathways. Component of one of the receptor for IL20 and IL24 formed by IL22RA1 and IL20RB also signaling through STATs activation. Mediates IL24 antiangiogenic activity as well as IL24 inhibitory effect on endothelial cell tube formation and differentiation. The polypeptide is Interleukin-22 receptor subunit alpha-1 (IL22RA1) (Homo sapiens (Human)).